Consider the following 248-residue polypeptide: 3-deoxy-manno-octulosonate cytidylyltransferase (248 aa).

It belongs to the KdsB family.

Its subcellular location is the cytoplasm. It catalyses the reaction 3-deoxy-alpha-D-manno-oct-2-ulosonate + CTP = CMP-3-deoxy-beta-D-manno-octulosonate + diphosphate. The protein operates within nucleotide-sugar biosynthesis; CMP-3-deoxy-D-manno-octulosonate biosynthesis; CMP-3-deoxy-D-manno-octulosonate from 3-deoxy-D-manno-octulosonate and CTP: step 1/1. It participates in bacterial outer membrane biogenesis; lipopolysaccharide biosynthesis. Functionally, activates KDO (a required 8-carbon sugar) for incorporation into bacterial lipopolysaccharide in Gram-negative bacteria. In Syntrophus aciditrophicus (strain SB), this protein is 3-deoxy-manno-octulosonate cytidylyltransferase.